The primary structure comprises 263 residues: Phosphatidylglycerol--prolipoprotein diacylglyceryl transferase (263 aa).

4 helical membrane passes run 15–35 (ISIHWYAICIVSGLLLAVYLA), 52–72 (FILLAFPIAIVGARLYYVIFQ), 83–103 (IFAIWNGGIAIYGGLIAGAAV), and 112–132 (AIAVLDFLDIAAPGVMIAQSI). Arg-134 is a binding site for a 1,2-diacyl-sn-glycero-3-phospho-(1'-sn-glycerol). A run of 3 helical transmembrane segments spans residues 170-190 (VPTFLYESLWNLVGFSIILGL), 200-220 (GDVTSFYLIWYGLGRFVIEGM), and 227-247 (FVGLRVSQWVSISIIILGAVL).

This sequence belongs to the Lgt family.

The protein resides in the cell membrane. It catalyses the reaction L-cysteinyl-[prolipoprotein] + a 1,2-diacyl-sn-glycero-3-phospho-(1'-sn-glycerol) = an S-1,2-diacyl-sn-glyceryl-L-cysteinyl-[prolipoprotein] + sn-glycerol 1-phosphate + H(+). Its pathway is protein modification; lipoprotein biosynthesis (diacylglyceryl transfer). In terms of biological role, catalyzes the transfer of the diacylglyceryl group from phosphatidylglycerol to the sulfhydryl group of the N-terminal cysteine of a prolipoprotein, the first step in the formation of mature lipoproteins. This chain is Phosphatidylglycerol--prolipoprotein diacylglyceryl transferase, found in Streptococcus thermophilus (strain CNRZ 1066).